Consider the following 275-residue polypeptide: Large ribosomal subunit protein uL2 (275 aa).

The tract at residues 221-275 is disordered; the sequence is RGTAMNPVDHPHGGGEGRTGEGRVPVNPWGQPTKGYRTRSNKRTNSMIVQRRHKR. A compositionally biased stretch (basic and acidic residues) spans 229-241; the sequence is DHPHGGGEGRTGE.

It belongs to the universal ribosomal protein uL2 family. Part of the 50S ribosomal subunit. Forms a bridge to the 30S subunit in the 70S ribosome.

One of the primary rRNA binding proteins. Required for association of the 30S and 50S subunits to form the 70S ribosome, for tRNA binding and peptide bond formation. It has been suggested to have peptidyltransferase activity; this is somewhat controversial. Makes several contacts with the 16S rRNA in the 70S ribosome. The polypeptide is Large ribosomal subunit protein uL2 (Dechloromonas aromatica (strain RCB)).